Reading from the N-terminus, the 455-residue chain is UDP-N-acetylmuramoylalanine--D-glutamate ligase (455 aa).

117-123 (GTNGKTT) serves as a coordination point for ATP.

Belongs to the MurCDEF family.

It is found in the cytoplasm. The enzyme catalyses UDP-N-acetyl-alpha-D-muramoyl-L-alanine + D-glutamate + ATP = UDP-N-acetyl-alpha-D-muramoyl-L-alanyl-D-glutamate + ADP + phosphate + H(+). It functions in the pathway cell wall biogenesis; peptidoglycan biosynthesis. Cell wall formation. Catalyzes the addition of glutamate to the nucleotide precursor UDP-N-acetylmuramoyl-L-alanine (UMA). This is UDP-N-acetylmuramoylalanine--D-glutamate ligase from Pelotomaculum thermopropionicum (strain DSM 13744 / JCM 10971 / SI).